Reading from the N-terminus, the 308-residue chain is Ornithine carbamoyltransferase (308 aa).

Residues 56-59 (STRT), Gln-83, Arg-107, and 134-137 (HPCQ) each bind carbamoyl phosphate. L-ornithine-binding positions include Asn-165, Asp-225, and 229 to 230 (SM). Carbamoyl phosphate contacts are provided by residues 264-265 (CL) and Arg-292.

This sequence belongs to the aspartate/ornithine carbamoyltransferase superfamily. OTCase family.

Its subcellular location is the cytoplasm. It carries out the reaction carbamoyl phosphate + L-ornithine = L-citrulline + phosphate + H(+). It participates in amino-acid biosynthesis; L-arginine biosynthesis; L-arginine from L-ornithine and carbamoyl phosphate: step 1/3. Reversibly catalyzes the transfer of the carbamoyl group from carbamoyl phosphate (CP) to the N(epsilon) atom of ornithine (ORN) to produce L-citrulline. The sequence is that of Ornithine carbamoyltransferase from Nitrobacter winogradskyi (strain ATCC 25391 / DSM 10237 / CIP 104748 / NCIMB 11846 / Nb-255).